Consider the following 410-residue polypeptide: MSSFDYLKTAIKQQGCTLQQVADASGMTKGYLSQLLNAKIKSPSAQKLEALHRFLGLEFPRRQKNIGVVFGKFYPLHTGHIYLIQRACSQVDELHIIMGYDDTRDRGLFEDSAMSQQPTVSDRLRWLLQTFKYQKNIRIHAFNEEGMEPYPHGWDVWSNGIKAFMAEKGIQPSWIYTSEEADAPQYLEHLGIETVLVDPERTFMNISGAQIRENPFRYWEYIPTEVKPFFVRTVAILGGESSGKSTLVNKLANIFNTTSAWEYGRDYVFSHLGGDEMALQYSDYDKIALGHAQYIDFAVKYANKVAFIDTDFVTTQAFCKKYEGREHPFVQALIDEYRFDLVILLENNTPWVADGLRSLGSSVDRKAFQNLLVEMLKENNIEFVHVKEADYDGRFLRCVELVKEMMGEQG.

The 56-residue stretch at 7–62 (LKTAIKQQGCTLQQVADASGMTKGYLSQLLNAKIKSPSAQKLEALHRFLGLEFPRR) folds into the HTH cro/C1-type domain. Positions 18–37 (LQQVADASGMTKGYLSQLLN) form a DNA-binding region, H-T-H motif. The nicotinamide mononucleotide adenylyltransferase stretch occupies residues 63–229 (QKNIGVVFGK…EYIPTEVKPF (167 aa)). NAD(+) contacts are provided by residues 70–73 (FGKF), H77, R104, 144–157 (EEGMEPYPHGWDVW), 177–179 (TSE), 204–206 (MNI), 259–261 (SAW), and 294–297 (YIDF). The ribosylnicotinamide kinase stretch occupies residues 230 to 410 (FVRTVAILGG…LVKEMMGEQG (181 aa)).

This sequence in the central section; belongs to the bacterial NMN adenylyltransferase family. In the C-terminal section; belongs to the bacterial RNK family. Homotetramer.

The protein resides in the cell membrane. It localises to the cytoplasm. The catalysed reaction is beta-nicotinamide D-ribonucleotide + ATP + H(+) = diphosphate + NAD(+). The enzyme catalyses beta-nicotinamide D-riboside + ATP = beta-nicotinamide D-ribonucleotide + ADP + H(+). It participates in cofactor biosynthesis; NAD(+) biosynthesis [regulation]. It functions in the pathway cofactor biosynthesis; NAD(+) biosynthesis; NAD(+) from nicotinamide D-ribonucleotide: step 1/1. With respect to regulation, feed-back regulated by NAD. A high level of NAD causes NadR to lose enzymatic activity and repress several NAD synthetic genes; conversely, a low NAD level activates the assimilatory enzymatic activities and leads to derepression of biosynthetic genes. In terms of biological role, this enzyme has three activities: DNA binding, nicotinamide mononucleotide (NMN) adenylyltransferase and ribosylnicotinamide (RN) kinase. The DNA-binding domain binds to the nadB operator sequence in an NAD- and ATP-dependent manner. As NAD levels increase within the cell, the affinity of NadR for the nadB operator regions of nadA, nadB, and pncB increases, repressing the transcription of these genes. The RN kinase activity catalyzes the phosphorylation of RN to form nicotinamide ribonucleotide. The NMN adenylyltransferase activity catalyzes the transfer of the AMP moiety of ATP to nicotinamide ribonucleotide to form NAD(+). The NMN adenylyltransferase domain also functions as the NAD and ATP sensor. The polypeptide is Trifunctional NAD biosynthesis/regulator protein NadR (nadR) (Salmonella typhimurium (strain LT2 / SGSC1412 / ATCC 700720)).